A 489-amino-acid chain; its full sequence is UDP-N-acetylmuramate--L-alanine ligase (489 aa).

128 to 134 (GTHGKTT) contacts ATP.

Belongs to the MurCDEF family.

The protein localises to the cytoplasm. The enzyme catalyses UDP-N-acetyl-alpha-D-muramate + L-alanine + ATP = UDP-N-acetyl-alpha-D-muramoyl-L-alanine + ADP + phosphate + H(+). It functions in the pathway cell wall biogenesis; peptidoglycan biosynthesis. In terms of biological role, cell wall formation. This is UDP-N-acetylmuramate--L-alanine ligase from Shewanella halifaxensis (strain HAW-EB4).